Consider the following 274-residue polypeptide: Aspartate/glutamate leucyltransferase (274 aa).

This sequence belongs to the R-transferase family. Bpt subfamily.

It localises to the cytoplasm. It catalyses the reaction N-terminal L-glutamyl-[protein] + L-leucyl-tRNA(Leu) = N-terminal L-leucyl-L-glutamyl-[protein] + tRNA(Leu) + H(+). The enzyme catalyses N-terminal L-aspartyl-[protein] + L-leucyl-tRNA(Leu) = N-terminal L-leucyl-L-aspartyl-[protein] + tRNA(Leu) + H(+). Functions in the N-end rule pathway of protein degradation where it conjugates Leu from its aminoacyl-tRNA to the N-termini of proteins containing an N-terminal aspartate or glutamate. This chain is Aspartate/glutamate leucyltransferase, found in Ruegeria sp. (strain TM1040) (Silicibacter sp.).